Here is a 209-residue protein sequence, read N- to C-terminus: Ribosomal RNA large subunit methyltransferase E (209 aa).

S-adenosyl-L-methionine is bound by residues Gly-63, Trp-65, Asp-83, Asp-99, and Asp-124. Lys-164 acts as the Proton acceptor in catalysis. Residues 191-209 form the TRAM domain; sequence EASRGRSREVYIVATGYKG.

The protein belongs to the class I-like SAM-binding methyltransferase superfamily. RNA methyltransferase RlmE family.

It is found in the cytoplasm. It catalyses the reaction uridine(2552) in 23S rRNA + S-adenosyl-L-methionine = 2'-O-methyluridine(2552) in 23S rRNA + S-adenosyl-L-homocysteine + H(+). Specifically methylates the uridine in position 2552 of 23S rRNA at the 2'-O position of the ribose in the fully assembled 50S ribosomal subunit. The polypeptide is Ribosomal RNA large subunit methyltransferase E (Haemophilus influenzae (strain 86-028NP)).